A 397-amino-acid chain; its full sequence is tRNA-specific 2-thiouridylase MnmA (397 aa).

ATP contacts are provided by residues 19–26 and leucine 45; that span reads AMSGGVDS. Cysteine 113 acts as the Nucleophile in catalysis. A disulfide bridge links cysteine 113 with cysteine 210. Position 137 (glycine 137) interacts with ATP. The segment at 160–162 is interaction with tRNA; sequence RDQ. Residue cysteine 210 is the Cysteine persulfide intermediate of the active site.

This sequence belongs to the MnmA/TRMU family.

The protein localises to the cytoplasm. The catalysed reaction is S-sulfanyl-L-cysteinyl-[protein] + uridine(34) in tRNA + AH2 + ATP = 2-thiouridine(34) in tRNA + L-cysteinyl-[protein] + A + AMP + diphosphate + H(+). Its function is as follows. Catalyzes the 2-thiolation of uridine at the wobble position (U34) of tRNA, leading to the formation of s(2)U34. The sequence is that of tRNA-specific 2-thiouridylase MnmA from Bradyrhizobium sp. (strain BTAi1 / ATCC BAA-1182).